The primary structure comprises 461 residues: Cysteine--tRNA ligase (461 aa).

Cys-27 serves as a coordination point for Zn(2+). Residues Ile-29–His-39 carry the 'HIGH' region motif. Zn(2+) is bound by residues Cys-208, His-233, and Glu-237. The 'KMSKS' region signature appears at Lys-265–Ser-269. Lys-268 is an ATP binding site.

It belongs to the class-I aminoacyl-tRNA synthetase family. Monomer. Requires Zn(2+) as cofactor.

The protein resides in the cytoplasm. It catalyses the reaction tRNA(Cys) + L-cysteine + ATP = L-cysteinyl-tRNA(Cys) + AMP + diphosphate. This Chromohalobacter salexigens (strain ATCC BAA-138 / DSM 3043 / CIP 106854 / NCIMB 13768 / 1H11) protein is Cysteine--tRNA ligase.